Reading from the N-terminus, the 477-residue chain is MIRRLQDSGDLVRAFPRVHFVGIGGTGMSGIAEVMLTLGYEVSGSDNSDNVATRRLAKLGARVMRGHSAANVLGTDCVVVSSAIRDDNPELMEARSQRIPIMPRAAMLAELMRFRRGIAVAGTHGKTTTTSLAAAVLSEGGLDPTFVIGGQLLAAGANAKLGGGQWLVAEADESDGSFLRLNPLMAVITNIDADHLENYGNDFARIQAAFAEFLQRLPFYGLSLLCIDDPEVAALAGRTPRHVMSYGMSENADVRAEDVVQDGPRMRFTLRLPEGTTTPVTLALPGRHNVLNALAAAAIGWQLGVAPGTIARALENFAGIGRRFNDLGEVTTSTGARVRVVDDYGHHPRELEAVFAAARGGWPDKRLVVAFQPHRYSRTRDQFDAFAAVLSTVDALVLSEVYPAGEAPIPGADSRALARAIRARGRSEPVVVGQIASLAEVLPDVLQDGDLLLMMGAGDIGYVAQHIINNGFVGEPA.

ATP is bound at residue 122 to 128; that stretch reads GTHGKTT.

It belongs to the MurCDEF family.

Its subcellular location is the cytoplasm. The enzyme catalyses UDP-N-acetyl-alpha-D-muramate + L-alanine + ATP = UDP-N-acetyl-alpha-D-muramoyl-L-alanine + ADP + phosphate + H(+). It participates in cell wall biogenesis; peptidoglycan biosynthesis. Functionally, cell wall formation. The chain is UDP-N-acetylmuramate--L-alanine ligase from Xanthomonas oryzae pv. oryzae (strain MAFF 311018).